Here is a 337-residue protein sequence, read N- to C-terminus: Casein kinase I isoform alpha-like (337 aa).

K8 bears the N6-acetyllysine mark. The 269-residue stretch at 17-285 folds into the Protein kinase domain; the sequence is YKLVRKIGSG…YLRQLFRILF (269 aa). Residues 23–31 and K46 each bind ATP; that span reads IGSGSFGDV. The Proton acceptor role is filled by D136. A compositionally biased stretch (low complexity) spans 309-325; it reads AASSSGQGQQAQTQTGK. Residues 309–337 are disordered; sequence AASSSGQGQQAQTQTGKQTEKNKNNVKDN. The segment covering 326–337 has biased composition (basic and acidic residues); that stretch reads QTEKNKNNVKDN.

Belongs to the protein kinase superfamily. CK1 Ser/Thr protein kinase family. Casein kinase I subfamily. In terms of assembly, interacts with FAM83A, FAM83B, FAM83C, FAM83D, FAM83E, FAM83F, FAM83G and FAM83H (via DUF1669).

The protein localises to the cytoplasm. It catalyses the reaction L-seryl-[protein] + ATP = O-phospho-L-seryl-[protein] + ADP + H(+). It carries out the reaction L-threonyl-[protein] + ATP = O-phospho-L-threonyl-[protein] + ADP + H(+). Its function is as follows. Casein kinases are operationally defined by their preferential utilization of acidic proteins such as caseins as substrates. It can phosphorylate a large number of proteins. Participates in Wnt signaling. In Homo sapiens (Human), this protein is Casein kinase I isoform alpha-like (CSNK1A1L).